The following is a 379-amino-acid chain: Dual-specificity RNA methyltransferase RlmN (379 aa).

Catalysis depends on glutamate 97, which acts as the Proton acceptor. Residues glutamine 103–aspartate 343 enclose the Radical SAM core domain. Residues cysteine 110 and cysteine 346 are joined by a disulfide bond. Positions 117, 121, and 124 each coordinate [4Fe-4S] cluster. S-adenosyl-L-methionine is bound by residues glycine 171–glutamate 172, serine 203, serine 225–histidine 227, and asparagine 303. Cysteine 346 acts as the S-methylcysteine intermediate in catalysis.

It belongs to the radical SAM superfamily. RlmN family. [4Fe-4S] cluster serves as cofactor.

Its subcellular location is the cytoplasm. The catalysed reaction is adenosine(2503) in 23S rRNA + 2 reduced [2Fe-2S]-[ferredoxin] + 2 S-adenosyl-L-methionine = 2-methyladenosine(2503) in 23S rRNA + 5'-deoxyadenosine + L-methionine + 2 oxidized [2Fe-2S]-[ferredoxin] + S-adenosyl-L-homocysteine. It catalyses the reaction adenosine(37) in tRNA + 2 reduced [2Fe-2S]-[ferredoxin] + 2 S-adenosyl-L-methionine = 2-methyladenosine(37) in tRNA + 5'-deoxyadenosine + L-methionine + 2 oxidized [2Fe-2S]-[ferredoxin] + S-adenosyl-L-homocysteine. Its function is as follows. Specifically methylates position 2 of adenine 2503 in 23S rRNA and position 2 of adenine 37 in tRNAs. m2A2503 modification seems to play a crucial role in the proofreading step occurring at the peptidyl transferase center and thus would serve to optimize ribosomal fidelity. This Pseudomonas aeruginosa (strain ATCC 15692 / DSM 22644 / CIP 104116 / JCM 14847 / LMG 12228 / 1C / PRS 101 / PAO1) protein is Dual-specificity RNA methyltransferase RlmN.